A 504-amino-acid chain; its full sequence is MSDLLDDEFYEEEFENDLLDASEFEDEFDEDAEIDDDGFTVERKRRRAHSVSYRVVSVRDLRASLNEKINQLTSIIDLTREQVLGLYRYFKWNRERLLERYIDAPEESLQKAGVGLSGSKQREVVHHEGTCEICYDEGCLPFFSAECDHEFCLACYRQYLDSRISEGESVIQCPEESCTQIVSIQSITKVLDEKSLDRYHRLLDRSFVDDNDHLRWCPAPDCEFAIECHVTQASLSSVVPTVTCNCGKQFCFGCGHDNHQPTICPLVKIWLQKCQDDSETANWIHANTKECPKCSTTIEKNGGCNHMTCKKCKYEFCWVCLGPWTEHGNNWYTCNRYEEKSSTSARDSQSKSRASLERYLHYYNRFANHEQSAKLDHELYEHTHKRMTQMQVDSNLSWVEVQFLKNAVDILFQCRQTLKWTYAFAYYLARNNQTEIFEDNQRDLELAVENLSELCERPCQDCSLSVFKQRVLDKTVYVRSRRDVLLDDTARGLAEGRWEYVVDV.

The tract at residues 127–338 (HEGTCEICYD…NNWYTCNRYE (212 aa)) is TRIAD supradomain. 18 residues coordinate Zn(2+): C131, C134, C147, H149, C152, C155, C173, C178, C217, C222, C244, C246, C251, C254, H259, C264, C291, and C294. The segment at 131–178 (CEICYDEGCLPFFSAECDHEFCLACYRQYLDSRISEGESVIQCPEESC) adopts an RING-type 1 zinc-finger fold. The segment at 197-264 (DRYHRLLDRS…GHDNHQPTIC (68 aa)) adopts an IBR-type zinc-finger fold. Residues 291–320 (CPKCSTTIEKNGGCNHMTCKKCKYEFCWVC) form an RING-type 2; atypical zinc finger. The active site involves C304. Zn(2+) is bound by residues C309, C312, C317, C320, H327, and C334.

Belongs to the RBR family.

It localises to the cytoplasm. The protein resides in the nucleus. It catalyses the reaction [E2 ubiquitin-conjugating enzyme]-S-ubiquitinyl-L-cysteine + [acceptor protein]-L-lysine = [E2 ubiquitin-conjugating enzyme]-L-cysteine + [acceptor protein]-N(6)-ubiquitinyl-L-lysine.. The protein operates within protein modification; protein ubiquitination. Its function is as follows. Probable ubiquitin-protein ligase involved in the degradation-related ubiquitination of histones. Contributes to the post-translational regulation of histone protein levels by polyubiquitination of excess histones for subsequent degradation. This is E3 ubiquitin-protein ligase dbl4 from Schizosaccharomyces pombe (strain 972 / ATCC 24843) (Fission yeast).